Reading from the N-terminus, the 224-residue chain is Peptidyl-tRNA hydrolase (224 aa).

Y27 contributes to the tRNA binding site. Catalysis depends on H32, which acts as the Proton acceptor. Positions 78, 80, and 126 each coordinate tRNA. Positions 203 to 215 are enriched in low complexity; the sequence is LSGPSSDLDGSNP. The segment at 203–224 is disordered; that stretch reads LSGPSSDLDGSNPAPGHGEASS.

The protein belongs to the PTH family. Monomer.

The protein localises to the cytoplasm. The catalysed reaction is an N-acyl-L-alpha-aminoacyl-tRNA + H2O = an N-acyl-L-amino acid + a tRNA + H(+). In terms of biological role, hydrolyzes ribosome-free peptidyl-tRNAs (with 1 or more amino acids incorporated), which drop off the ribosome during protein synthesis, or as a result of ribosome stalling. Its function is as follows. Catalyzes the release of premature peptidyl moieties from peptidyl-tRNA molecules trapped in stalled 50S ribosomal subunits, and thus maintains levels of free tRNAs and 50S ribosomes. The protein is Peptidyl-tRNA hydrolase of Synechococcus sp. (strain JA-2-3B'a(2-13)) (Cyanobacteria bacterium Yellowstone B-Prime).